The following is a 507-amino-acid chain: MCRRNVILVFCASFALFFTFIIFGRYPGGRFAVLYENATGPSETRPLKAFISSSYFYPTSKSLGDNALALVMSVNLVQTPSFLTPYFQEIVISAENATSSAVVSTPFFRIIPHEQCQIMTIFATAQLLPNVKRIQMVSHDGLTDIPFSPPSAIKRDVVMCIAPLFVSEQWQNFLFAVHIYKKYGGFMNLYLISTINTFFAVMKEYEKEGYMKVQPWPKVNFPGVPMDIADTHGQIEFRSQTAAQTDCLLQYKESAQYLAFLDLDDVLIPRIAPTYIEEFQRIIKGKKPLAYFLYHKENYEAFVTPNSSQFSLKNMFGSLKCRNFRETGKSVIDPQNANYTWLHYPPVLVNGLEKYEVEENVITHLKTINWVEDEVKTGNGTIIEPMYYDNSSATIISSKDIKDIEDDLQRMRNKPEIKKLFAELPKIRYYSDLVLKCYNEKFYDYFYSGRYEKITCPGPQYCDFKQHPDITCMRVNATHIERETLSPVTYYYAKDPYFTDKMGCYAH.

Residues 6–26 traverse the membrane as a helical segment; that stretch reads VILVFCASFALFFTFIIFGRY. The GT92 domain maps to 155–444; the sequence is RDVVMCIAPL…LKCYNEKFYD (290 aa).

The protein belongs to the glycosyltransferase 92 family.

The protein resides in the membrane. The sequence is that of Glycosyltransferase family 92 protein C33H5.2 from Caenorhabditis elegans.